A 336-amino-acid chain; its full sequence is Holliday junction branch migration complex subunit RuvB (336 aa).

The tract at residues 4–184 (ADRLIQPQVI…FGIPLRLEFY (181 aa)) is large ATPase domain (RuvB-L). ATP is bound by residues R24, G65, K68, T69, T70, 131–133 (EDY), R174, Y184, and R221. T69 provides a ligand contact to Mg(2+). Residues 185 to 255 (NIKDLSTIVI…VAELALDMLD (71 aa)) form a small ATPAse domain (RuvB-S) region. The interval 258–336 (AEGFDYMDRK…HFNLIQPEAK (79 aa)) is head domain (RuvB-H). 3 residues coordinate DNA: R294, R313, and R318.

The protein belongs to the RuvB family. In terms of assembly, homohexamer. Forms an RuvA(8)-RuvB(12)-Holliday junction (HJ) complex. HJ DNA is sandwiched between 2 RuvA tetramers; dsDNA enters through RuvA and exits via RuvB. An RuvB hexamer assembles on each DNA strand where it exits the tetramer. Each RuvB hexamer is contacted by two RuvA subunits (via domain III) on 2 adjacent RuvB subunits; this complex drives branch migration. In the full resolvosome a probable DNA-RuvA(4)-RuvB(12)-RuvC(2) complex forms which resolves the HJ.

It localises to the cytoplasm. The catalysed reaction is ATP + H2O = ADP + phosphate + H(+). Functionally, the RuvA-RuvB-RuvC complex processes Holliday junction (HJ) DNA during genetic recombination and DNA repair, while the RuvA-RuvB complex plays an important role in the rescue of blocked DNA replication forks via replication fork reversal (RFR). RuvA specifically binds to HJ cruciform DNA, conferring on it an open structure. The RuvB hexamer acts as an ATP-dependent pump, pulling dsDNA into and through the RuvAB complex. RuvB forms 2 homohexamers on either side of HJ DNA bound by 1 or 2 RuvA tetramers; 4 subunits per hexamer contact DNA at a time. Coordinated motions by a converter formed by DNA-disengaged RuvB subunits stimulates ATP hydrolysis and nucleotide exchange. Immobilization of the converter enables RuvB to convert the ATP-contained energy into a lever motion, pulling 2 nucleotides of DNA out of the RuvA tetramer per ATP hydrolyzed, thus driving DNA branch migration. The RuvB motors rotate together with the DNA substrate, which together with the progressing nucleotide cycle form the mechanistic basis for DNA recombination by continuous HJ branch migration. Branch migration allows RuvC to scan DNA until it finds its consensus sequence, where it cleaves and resolves cruciform DNA. This chain is Holliday junction branch migration complex subunit RuvB, found in Shewanella piezotolerans (strain WP3 / JCM 13877).